A 230-amino-acid polypeptide reads, in one-letter code: MRLDVVTIFPEYLEPLRAALLGKAIDKGLISVEVHDLRDWTHDVHKAVDDSPYGGGPGMVMKPTVWGPALDDVLAAGDGDTDTLLVVPTPAGVPFTQATAERWAGEKRIVFACGRYEGIDQRVFDDAARRVRVEEVSIGDYVLIGGEAAVLVMTEAFVRLIPGVLGNQQSHQEDSFSDGLLEGPSYTRPATWRGLDVPPVLLSGDHAKVAAWRREQSLQRTAERRPDLLP.

S-adenosyl-L-methionine is bound by residues glycine 114 and 138–143 (IGDYVL).

This sequence belongs to the RNA methyltransferase TrmD family. As to quaternary structure, homodimer.

It localises to the cytoplasm. The enzyme catalyses guanosine(37) in tRNA + S-adenosyl-L-methionine = N(1)-methylguanosine(37) in tRNA + S-adenosyl-L-homocysteine + H(+). Its function is as follows. Specifically methylates guanosine-37 in various tRNAs. The chain is tRNA (guanine-N(1)-)-methyltransferase from Rhodococcus jostii (strain RHA1).